Reading from the N-terminus, the 291-residue chain is Tyramine--L-glutamate ligase (291 aa).

Positions 104–274 (KYPVKNLGCS…LAELLIKNAN (171 aa)) constitute an ATP-grasp domain. 131–176 (KDYVKTPKTFKPKKYVIKKIDGCGGKFNLFDENFLIQEFVEGESLS) serves as a coordination point for ATP. Mg(2+) is bound by residues aspartate 236, glutamate 247, and asparagine 249. Residues aspartate 236, glutamate 247, and asparagine 249 each contribute to the Mn(2+) site.

Mg(2+) is required as a cofactor. Requires Mn(2+) as cofactor.

The catalysed reaction is tyramine + L-glutamate + ATP = gamma-L-glutamyltyramine + ADP + phosphate + H(+). Its pathway is cofactor biosynthesis; methanofuran biosynthesis. Functionally, catalyzes the formation of an amide bond between tyramine and the gamma carboxy group of L-glutamate. The enzyme also accepts phenylethylamine in vitro. This chain is Tyramine--L-glutamate ligase, found in Methanocaldococcus fervens (strain DSM 4213 / JCM 15782 / AG86) (Methanococcus fervens).